The chain runs to 411 residues: MSQKSDLRNRIIFTLFLLVLARLGIFIPVPGIDHDAFYASVEKNTLVNFLNIFSGGGFSTIGIFALGIVPYINSSIVMQLLTKIVPNLEKLQKEEGELGRQKITQITRYLALGWATLQSGAISIWVKPYVFNWNFAFVCESVLALTAGSMIIMWLSELITEKGIGNGASLLIFQNIVSGLPKNFTQSFFDASYSNASLKFGLFIAIFLLMIIITICVQEGTRRIKIISARQLGKSSILDPNSYLPLKLNQGGVMPIVFASASMALPSYLTQIIQNKTLLQILYLFCPNGSLYLLLYCALILFFSYFYTSIVMNPEDIAINLKKMGASIPNIRPGQATIDYLQVILNRLTFLGASFLFTVALIPFIIEKVTQIQNLRGLGATSLLILVGVAIDTAKQIQTYVISKKYDSMTK.

Helical transmembrane passes span 11–31, 52–72, 111–131, 135–155, 163–180, 197–217, 253–273, 291–311, 349–369, and 377–397; these read IIFTLFLLVLARLGIFIPVPG, IFSGGGFSTIGIFALGIVPYI, ALGWATLQSGAISIWVKPYVF, FAFVCESVLALTAGSMIIMWL, GIGNGASLLIFQNIVSGL, SLKFGLFIAIFLLMIIITICV, VMPIVFASASMALPSYLTQII, LYLLLYCALILFFSYFYTSIV, TFLGASFLFTVALIPFIIEKV, and GLGATSLLILVGVAIDTAKQI.

The protein belongs to the SecY/SEC61-alpha family. As to quaternary structure, component of the plastid Sec protein translocase complex, which is composed of at least SecY, SecE and SecG.

It is found in the plastid. It localises to the chloroplast thylakoid membrane. Functionally, the central subunit of the protein translocation channel SecYE. Consists of two halves formed by TMs 1-5 and 6-10. These two domains form a lateral gate at the front which open onto the bilayer between TMs 2 and 7, and are clamped together by SecE at the back. The channel is closed by both a pore ring composed of hydrophobic SecY resides and a short helix (helix 2A) on the extracellular side of the membrane which forms a plug. In Pyropia yezoensis (Susabi-nori), this protein is Protein translocase subunit SecY.